The sequence spans 237 residues: Sugar fermentation stimulation protein homolog (237 aa).

This sequence belongs to the SfsA family.

The polypeptide is Sugar fermentation stimulation protein homolog (Pseudomonas fluorescens (strain ATCC BAA-477 / NRRL B-23932 / Pf-5)).